A 277-amino-acid polypeptide reads, in one-letter code: Caspase-3 (277 aa).

Residue methionine 1 is modified to N-acetylmethionine. Propeptides lie at residues 1–9 (MENTENSVD) and 10–28 (SKSIKNLEPKIIHGSQSMD). Residues 1-10 (MENTENSVDS) show a composition bias toward polar residues. Residues 1–20 (MENTENSVDSKSIKNLEPKI) are disordered. Lysine 11 bears the N6-acetyllysine mark. The segment covering 11-20 (KSIKNLEPKI) has biased composition (basic and acidic residues). Residue serine 26 is modified to Phosphoserine. Catalysis depends on residues histidine 121 and cysteine 163. Cysteine 163 is subject to S-nitrosocysteine; in inhibited form.

The protein belongs to the peptidase C14A family. In terms of assembly, heterotetramer that consists of two anti-parallel arranged heterodimers, each one formed by a 17 kDa (p17) and a 12 kDa (p12) subunit. Interacts with BIRC6/bruce. In terms of processing, cleavage by granzyme B, caspase-6, caspase-8 and caspase-10 generates the two active subunits. Additional processing of the propeptides is likely due to the autocatalytic activity of the activated protease. Active heterodimers between the small subunit of caspase-7 protease and the large subunit of caspase-3 also occur and vice versa. Post-translationally, S-nitrosylated on its catalytic site cysteine in unstimulated cell lines and denitrosylated upon activation of the Fas apoptotic pathway, associated with an increase in intracellular caspase activity. Fas therefore activates caspase-3 not only by inducing the cleavage of the caspase zymogen to its active subunits, but also by stimulating the denitrosylation of its active site thiol. Ubiquitinated by BIRC6; this activity is inhibited by DIABLO/SMAC.

The protein resides in the cytoplasm. The catalysed reaction is Strict requirement for an Asp residue at positions P1 and P4. It has a preferred cleavage sequence of Asp-Xaa-Xaa-Asp-|- with a hydrophobic amino-acid residue at P2 and a hydrophilic amino-acid residue at P3, although Val or Ala are also accepted at this position.. With respect to regulation, inhibited by BIRC6; following inhibition of BIRC6-caspase binding by DIABLO/SMAC, BIRC6 is subjected to caspase cleavage, leading to an increase in active caspases. In terms of biological role, involved in the activation cascade of caspases responsible for apoptosis execution. At the onset of apoptosis, it proteolytically cleaves poly(ADP-ribose) polymerase PARP1 at a '216-Asp-|-Gly-217' bond. Cleaves and activates sterol regulatory element binding proteins (SREBPs) between the basic helix-loop-helix leucine zipper domain and the membrane attachment domain. Cleaves and activates caspase-6, -7 and -9 (CASP6, CASP7 and CASP9, respectively). Cleaves and inactivates interleukin-18 (IL18). Triggers cell adhesion in sympathetic neurons through RET cleavage. Cleaves IL-1 beta between an Asp and an Ala, releasing the mature cytokine which is involved in a variety of inflammatory processes. Cleaves and inhibits serine/threonine-protein kinase AKT1 in response to oxidative stress. Acts as an inhibitor of type I interferon production during virus-induced apoptosis by mediating cleavage of antiviral proteins CGAS, IRF3 and MAVS, thereby preventing cytokine overproduction. Also involved in pyroptosis by mediating cleavage and activation of gasdermin-E (GSDME). Cleaves XRCC4 and phospholipid scramblase proteins XKR4, XKR8 and XKR9, leading to promote phosphatidylserine exposure on apoptotic cell surface. Cleaves BIRC6 following inhibition of BIRC6-caspase binding by DIABLO/SMAC. This chain is Caspase-3 (CASP3), found in Pan troglodytes (Chimpanzee).